The primary structure comprises 124 residues: Alpha-amylase inhibitor 0.19 (124 aa).

5 cysteine pairs are disulfide-bonded: cysteine 6–cysteine 52, cysteine 20–cysteine 41, cysteine 28–cysteine 83, cysteine 42–cysteine 99, and cysteine 54–cysteine 115.

Belongs to the protease inhibitor I6 (cereal trypsin/alpha-amylase inhibitor) family. As to quaternary structure, homodimer. The disulfide bonds are essential for the inhibitor activity. As to expression, endosperm.

The protein localises to the secreted. In terms of biological role, alpha-amylase inhibitor. The protein is Alpha-amylase inhibitor 0.19 of Triticum aestivum (Wheat).